We begin with the raw amino-acid sequence, 770 residues long: Penicillin-binding protein 1C (770 aa).

Residues Met-1–Arg-8 lie on the Cytoplasmic side of the membrane. The chain crosses the membrane as a helical; Signal-anchor for type II membrane protein span at residues Gly-9–Asp-29. The Periplasmic portion of the chain corresponds to Lys-30–Gln-770. The transglycosylase stretch occupies residues Arg-43 to Glu-213. Glu-84 functions as the Proton donor; for transglycosylase activity in the catalytic mechanism. The segment at Ala-278–Gln-559 is transpeptidase. Ser-342 acts as the Acyl-ester intermediate; for transpeptidase activity in catalysis.

The protein in the N-terminal section; belongs to the glycosyltransferase 51 family. It in the C-terminal section; belongs to the transpeptidase family.

The protein resides in the cell inner membrane. It catalyses the reaction [GlcNAc-(1-&gt;4)-Mur2Ac(oyl-L-Ala-gamma-D-Glu-L-Lys-D-Ala-D-Ala)](n)-di-trans,octa-cis-undecaprenyl diphosphate + beta-D-GlcNAc-(1-&gt;4)-Mur2Ac(oyl-L-Ala-gamma-D-Glu-L-Lys-D-Ala-D-Ala)-di-trans,octa-cis-undecaprenyl diphosphate = [GlcNAc-(1-&gt;4)-Mur2Ac(oyl-L-Ala-gamma-D-Glu-L-Lys-D-Ala-D-Ala)](n+1)-di-trans,octa-cis-undecaprenyl diphosphate + di-trans,octa-cis-undecaprenyl diphosphate + H(+). Its pathway is cell wall biogenesis; peptidoglycan biosynthesis. With respect to regulation, transglycosylase activity can be inhibited by moenomycin. Functionally, cell wall formation. The enzyme has a penicillin-insensitive transglycosylase N-terminal domain (formation of linear glycan strands) and a transpeptidase C-terminal domain which may not be functional. This Escherichia coli (strain K12) protein is Penicillin-binding protein 1C (pbpC).